We begin with the raw amino-acid sequence, 81 residues long: ATP synthase subunit c (81 aa).

2 consecutive transmembrane segments (helical) span residues 6–26 (ASAS…GPGI) and 57–77 (LAFM…LLFA).

It belongs to the ATPase C chain family. F-type ATPases have 2 components, F(1) - the catalytic core - and F(0) - the membrane proton channel. F(1) has five subunits: alpha(3), beta(3), gamma(1), delta(1), epsilon(1). F(0) has four main subunits: a(1), b(1), b'(1) and c(10-14). The alpha and beta chains form an alternating ring which encloses part of the gamma chain. F(1) is attached to F(0) by a central stalk formed by the gamma and epsilon chains, while a peripheral stalk is formed by the delta, b and b' chains.

It localises to the cellular thylakoid membrane. F(1)F(0) ATP synthase produces ATP from ADP in the presence of a proton or sodium gradient. F-type ATPases consist of two structural domains, F(1) containing the extramembraneous catalytic core and F(0) containing the membrane proton channel, linked together by a central stalk and a peripheral stalk. During catalysis, ATP synthesis in the catalytic domain of F(1) is coupled via a rotary mechanism of the central stalk subunits to proton translocation. Its function is as follows. Key component of the F(0) channel; it plays a direct role in translocation across the membrane. A homomeric c-ring of between 10-14 subunits forms the central stalk rotor element with the F(1) delta and epsilon subunits. This Gloeothece citriformis (strain PCC 7424) (Cyanothece sp. (strain PCC 7424)) protein is ATP synthase subunit c.